Reading from the N-terminus, the 91-residue chain is DNA-directed RNA polymerase subunit Rpo5 (91 aa).

It belongs to the archaeal Rpo5/eukaryotic RPB5 RNA polymerase subunit family. Part of the RNA polymerase complex.

The protein localises to the cytoplasm. The catalysed reaction is RNA(n) + a ribonucleoside 5'-triphosphate = RNA(n+1) + diphosphate. Its function is as follows. DNA-dependent RNA polymerase (RNAP) catalyzes the transcription of DNA into RNA using the four ribonucleoside triphosphates as substrates. The polypeptide is DNA-directed RNA polymerase subunit Rpo5 (Staphylothermus marinus (strain ATCC 43588 / DSM 3639 / JCM 9404 / F1)).